The following is a 348-amino-acid chain: Protein pelota homolog (348 aa).

Belongs to the eukaryotic release factor 1 family. Pelota subfamily. As to quaternary structure, monomer. It depends on a divalent metal cation as a cofactor.

The protein resides in the cytoplasm. Functionally, may function in recognizing stalled ribosomes, interact with stem-loop structures in stalled mRNA molecules, and effect endonucleolytic cleavage of the mRNA. May play a role in the release non-functional ribosomes and degradation of damaged mRNAs. Has endoribonuclease activity. The polypeptide is Protein pelota homolog (Methanococcus maripaludis (strain DSM 14266 / JCM 13030 / NBRC 101832 / S2 / LL)).